The following is a 298-amino-acid chain: Succinate dehydrogenase [ubiquinone] iron-sulfur subunit, mitochondrial (298 aa).

Positions 59-147 constitute a 2Fe-2S ferredoxin-type domain; that stretch reads YRFNPEAPGA…STKIYPLPHM (89 aa). Positions 107, 112, 115, and 127 each coordinate [2Fe-2S] cluster. The 4Fe-4S ferredoxin-type domain occupies 190 to 220; it reads ERDRLDGLYECILCACCSTSCPSYWWNADKY. [4Fe-4S] cluster contacts are provided by Cys200, Cys203, and Cys206. [3Fe-4S] cluster is bound at residue Cys210. Position 215 (Trp215) interacts with a ubiquinone. The [3Fe-4S] cluster site is built by Cys257 and Cys263. Cys267 serves as a coordination point for [4Fe-4S] cluster.

It belongs to the succinate dehydrogenase/fumarate reductase iron-sulfur protein family. As to quaternary structure, component of complex II composed of four subunits: a flavoprotein (FP), an iron-sulfur protein (IP), and a cytochrome b composed of a large and a small subunit. The cofactor is [2Fe-2S] cluster. [3Fe-4S] cluster serves as cofactor. It depends on [4Fe-4S] cluster as a cofactor.

It is found in the mitochondrion inner membrane. It catalyses the reaction a quinone + succinate = fumarate + a quinol. The protein operates within carbohydrate metabolism; tricarboxylic acid cycle; fumarate from succinate (eukaryal route): step 1/1. In terms of biological role, iron-sulfur protein (IP) subunit of succinate dehydrogenase (SDH) that is involved in complex II of the mitochondrial electron transport chain and is responsible for transferring electrons from succinate to ubiquinone (coenzyme Q). The protein is Succinate dehydrogenase [ubiquinone] iron-sulfur subunit, mitochondrial (sdhb-1) of Caenorhabditis elegans.